The sequence spans 882 residues: DNA mismatch repair protein MutS (882 aa).

627 to 634 contributes to the ATP binding site; that stretch reads GPNMAGKS.

This sequence belongs to the DNA mismatch repair MutS family.

Functionally, this protein is involved in the repair of mismatches in DNA. It is possible that it carries out the mismatch recognition step. This protein has a weak ATPase activity. This chain is DNA mismatch repair protein MutS, found in Anaeromyxobacter dehalogenans (strain 2CP-C).